The chain runs to 118 residues: Beta-2-microglobulin (118 aa).

The signal sequence occupies residues Met1–Ala20. Residues Pro25–Val112 form the Ig-like C1-type domain. Residues Cys45 and Cys99 are joined by a disulfide bond.

It belongs to the beta-2-microglobulin family. Heterodimer of an alpha chain and a beta chain. Beta-2-microglobulin is the beta-chain of major histocompatibility complex class I molecules.

The protein resides in the secreted. Component of the class I major histocompatibility complex (MHC). Involved in the presentation of peptide antigens to the immune system. In Sus scrofa (Pig), this protein is Beta-2-microglobulin (B2M).